A 219-amino-acid polypeptide reads, in one-letter code: Elongation factor Ts (219 aa).

Residues 82-85 form an involved in Mg(2+) ion dislocation from EF-Tu region; it reads TDFV.

It belongs to the EF-Ts family.

It is found in the cytoplasm. Its function is as follows. Associates with the EF-Tu.GDP complex and induces the exchange of GDP to GTP. It remains bound to the aminoacyl-tRNA.EF-Tu.GTP complex up to the GTP hydrolysis stage on the ribosome. The protein is Elongation factor Ts of Anaeromyxobacter dehalogenans (strain 2CP-1 / ATCC BAA-258).